Reading from the N-terminus, the 133-residue chain is UPF0146 protein MTH_1000 (133 aa).

This sequence belongs to the UPF0146 family.

The chain is UPF0146 protein MTH_1000 from Methanothermobacter thermautotrophicus (strain ATCC 29096 / DSM 1053 / JCM 10044 / NBRC 100330 / Delta H) (Methanobacterium thermoautotrophicum).